A 508-amino-acid polypeptide reads, in one-letter code: Photosystem II CP47 reaction center protein (508 aa).

A run of 6 helical transmembrane segments spans residues 21–36 (SVHI…WAGS), 101–115 (IVFS…IWHW), 140–156 (GIHL…FGAF), 203–218 (IAAG…FHLS), 237–252 (VLSS…AFIV), and 457–472 (TFAL…HGAR).

This sequence belongs to the PsbB/PsbC family. PsbB subfamily. As to quaternary structure, PSII is composed of 1 copy each of membrane proteins PsbA, PsbB, PsbC, PsbD, PsbE, PsbF, PsbH, PsbI, PsbJ, PsbK, PsbL, PsbM, PsbT, PsbX, PsbY, PsbZ, Psb30/Ycf12, at least 3 peripheral proteins of the oxygen-evolving complex and a large number of cofactors. It forms dimeric complexes. Requires Binds multiple chlorophylls. PSII binds additional chlorophylls, carotenoids and specific lipids. as cofactor.

The protein resides in the plastid. Its subcellular location is the chloroplast thylakoid membrane. In terms of biological role, one of the components of the core complex of photosystem II (PSII). It binds chlorophyll and helps catalyze the primary light-induced photochemical processes of PSII. PSII is a light-driven water:plastoquinone oxidoreductase, using light energy to abstract electrons from H(2)O, generating O(2) and a proton gradient subsequently used for ATP formation. This is Photosystem II CP47 reaction center protein from Pinus thunbergii (Japanese black pine).